The sequence spans 545 residues: MLPGAWLLWTSLLLLARPAQPCPMGCDCFVQEVFCSDEELATVPLDIPPYTKNIIFVETSFTTLETRAFGSNPNLTKVVFLNTQLCQFRPDAFGGLPRLEDLEVTGSSFLNLSTNIFSNLTSLGKLTLNFNMLEALPEGLFQHLAALESLHLQGNQLQALPRRLFQPLTHLKTLNLAQNLLAQLPEELFHPLTSLQTLKLSNNALSGLPQGVFGKLGSLQELFLDSNNISELPPQVFSQLFCLERLWLQRNAITHLPLSIFASLGNLTFLSLQWNMLRVLPAGLFAHTPCLVGLSLTHNQLETVAEGTFAHLSNLRSLMLSYNAITHLPAGIFRDLEELVKLYLGSNNLTALHPALFQNLSKLELLSLSKNQLTTLPEGIFDTNYNLFNLALHGNPWQCDCHLAYLFNWLQQYTDRLLNIQTYCAGPAYLKGQVVPALNEKQLVCPVTRDHLGFQVTWPDESKAGGSWDLAVQERAARSQCTYSNPEGTVVLACDQAQCRWLNVQLSPQQGSLGLQYNASQEWDLRSSCGSLRLTVSIEARAAGP.

The signal sequence occupies residues M1–P21. Residues C22–P49 enclose the LRRNT domain. 3 N-linked (GlcNAc...) asparagine glycosylation sites follow: N74, N111, and N119. LRR repeat units lie at residues R98–N119, S122–H143, A146–P167, H170–P191, S194–K215, S218–Q239, C242–S263, N266–H287, C290–H311, N314–D335, E338–N359, and K362–T383. N228 carries N-linked (GlcNAc...) asparagine glycosylation. A glycan (N-linked (GlcNAc...) asparagine) is linked at N266. Residues N348 and N359 are each glycosylated (N-linked (GlcNAc...) asparagine). In terms of domain architecture, LRRCT spans N395–V447. N518 carries an N-linked (GlcNAc...) asparagine glycan.

As to quaternary structure, tetramer of two catalytic chains and two glycosylated inactive chains. In terms of processing, whether or not any Cys residues participate in intrachain bonds is unknown, but they do not form interchain disulfide bonds with the 50 kDa catalytic subunit.

It localises to the secreted. In terms of biological role, the 83 kDa subunit binds and stabilizes the catalytic subunit at 37 degrees Celsius and keeps it in circulation. Under some circumstances it may be an allosteric modifier of the catalytic subunit. This chain is Carboxypeptidase N subunit 2 (CPN2), found in Homo sapiens (Human).